We begin with the raw amino-acid sequence, 263 residues long: Chaperone protein ClpE (263 aa).

Positions 1 to 34 (MSKRNAVTTFFTNRVTKALGMTLALMMTCQSAMA) are cleaved as a signal peptide. The segment covering 238–255 (QKKTPTSSGQKASDSLVN) has biased composition (polar residues). Residues 238–263 (QKKTPTSSGQKASDSLVNPSDKADKK) are disordered.

This sequence belongs to the periplasmic pilus chaperone family.

It is found in the periplasm. Functionally, involved in the biogenesis of the CS31A capsule-like antigen. In Escherichia coli, this protein is Chaperone protein ClpE (clpE).